The sequence spans 547 residues: MATMVPSVLWPRACWTLLVCCLLTPGVQGQEFLLRVEPQNPVLSAGGSLFVNCSTDCPSSEKIALETSLSKELVASGMGWAAFNLSNVTGNSRILCSVYCNGSQITGSSNITVYRLPERVELAPLPPWQPVGQNFTLRCQVEDGSPRTSLTVVLLRWEEELSRQPAVEEPAEVTATVLASRDDHGAPFSCRTELDMQPQGLGLFVNTSAPRQLRTFVLPVTPPRLVAPRFLEVETSWPVDCTLDGLFPASEAQVYLALGDQMLNATVMNHGDTLTATATATARADQEGAREIVCNVTLGGERREARENLTVFSFLGPIVNLSEPTAHEGSTVTVSCMAGARVQVTLDGVPAAAPGQPAQLQLNATESDDGRSFFCSATLEVDGEFLHRNSSVQLRVLYGPKIDRATCPQHLKWKDKTRHVLQCQARGNPYPELRCLKEGSSREVPVGIPFFVNVTHNGTYQCQASSSRGKYTLVVVMDIEAGSSHFVPVFVAVLLTLGVVTIVLALMYVFREHQRSGSYHVREESTYLPLTSMQPTEAMGEEPSRAE.

The signal sequence occupies residues 1 to 29 (MATMVPSVLWPRACWTLLVCCLLTPGVQG). The Extracellular segment spans residues 30–485 (QEFLLRVEPQ…VMDIEAGSSH (456 aa)). Residues 46–103 (GGSLFVNCSTDCPSSEKIALETSLSKELVASGMGWAAFNLSNVTGNSRILCSVYCNGS) enclose the Ig-like C2-type 1 domain. N-linked (GlcNAc...) asparagine glycosylation is found at N52, N84, N87, N101, N110, and N134. Disulfide bonds link C53–C96 and C57–C100. The 66-residue stretch at 132-197 (GQNFTLRCQV…FSCRTELDMQ (66 aa)) folds into the Ig-like C2-type 2 domain. C139 and C190 are joined by a disulfide. Residues N206, N264, N295, N308, N320, N363, N389, N453, and N457 are each glycosylated (N-linked (GlcNAc...) asparagine). Residues 234–301 (ETSWPVDCTL…IVCNVTLGGE (68 aa)) enclose the Ig-like C2-type 3 domain. The cysteines at positions 241 and 294 are disulfide-linked. The Ig-like C2-type 4 domain maps to 329 to 382 (GSTVTVSCMAGARVQVTLDGVPAAAPGQPAQLQLNATESDDGRSFFCSATLEVD). An intrachain disulfide couples C336 to C375. An Ig-like C2-type 5 domain is found at 416–469 (KTRHVLQCQARGNPYPELRCLKEGSSREVPVGIPFFVNVTHNGTYQCQASSSRG). An intrachain disulfide couples C423 to C462. The chain crosses the membrane as a helical span at residues 486-510 (FVPVFVAVLLTLGVVTIVLALMYVF). Over 511–547 (REHQRSGSYHVREESTYLPLTSMQPTEAMGEEPSRAE) the chain is Cytoplasmic.

This sequence belongs to the immunoglobulin superfamily. ICAM family. Interacts with moesin/MSN. Post-translationally, upon stimulation by a physiologic stimuli becomes rapidly and transiently phosphorylated on serine residues. In terms of processing, N-glycosylated; glycans consist of a mixture of tri- and tetra-antennary complex-type chains and high-mannose chains. In terms of tissue distribution, leukocytes.

Its subcellular location is the membrane. In terms of biological role, ICAM proteins are ligands for the leukocyte adhesion protein LFA-1 (integrin alpha-L/beta-2). ICAM3 is also a ligand for integrin alpha-D/beta-2. In association with integrin alpha-L/beta-2, contributes to apoptotic neutrophil phagocytosis by macrophages. This chain is Intercellular adhesion molecule 3 (ICAM3), found in Homo sapiens (Human).